The chain runs to 892 residues: Alanine--tRNA ligase (892 aa).

His574, His578, Cys677, and His681 together coordinate Zn(2+).

The protein belongs to the class-II aminoacyl-tRNA synthetase family. The cofactor is Zn(2+).

The protein localises to the cytoplasm. The enzyme catalyses tRNA(Ala) + L-alanine + ATP = L-alanyl-tRNA(Ala) + AMP + diphosphate. Its function is as follows. Catalyzes the attachment of alanine to tRNA(Ala) in a two-step reaction: alanine is first activated by ATP to form Ala-AMP and then transferred to the acceptor end of tRNA(Ala). Also edits incorrectly charged Ser-tRNA(Ala) and Gly-tRNA(Ala) via its editing domain. This is Alanine--tRNA ligase from Mesoplasma florum (strain ATCC 33453 / NBRC 100688 / NCTC 11704 / L1) (Acholeplasma florum).